The sequence spans 174 residues: Endoribonuclease YbeY (174 aa).

The Zn(2+) site is built by histidine 124, histidine 128, and histidine 134.

The protein belongs to the endoribonuclease YbeY family. Zn(2+) serves as cofactor.

It is found in the cytoplasm. Single strand-specific metallo-endoribonuclease involved in late-stage 70S ribosome quality control and in maturation of the 3' terminus of the 16S rRNA. The sequence is that of Endoribonuclease YbeY from Synechococcus elongatus (strain ATCC 33912 / PCC 7942 / FACHB-805) (Anacystis nidulans R2).